A 161-amino-acid chain; its full sequence is NADH-quinone oxidoreductase subunit I (161 aa).

4Fe-4S ferredoxin-type domains follow at residues 52 to 82 and 92 to 121; these read LRRY…IESE and SRYD…ETRV. The [4Fe-4S] cluster site is built by cysteine 62, cysteine 65, cysteine 68, cysteine 72, cysteine 101, cysteine 104, cysteine 107, and cysteine 111.

The protein belongs to the complex I 23 kDa subunit family. In terms of assembly, NDH-1 is composed of 14 different subunits. Subunits NuoA, H, J, K, L, M, N constitute the membrane sector of the complex. [4Fe-4S] cluster serves as cofactor.

The protein localises to the cell inner membrane. It carries out the reaction a quinone + NADH + 5 H(+)(in) = a quinol + NAD(+) + 4 H(+)(out). Functionally, NDH-1 shuttles electrons from NADH, via FMN and iron-sulfur (Fe-S) centers, to quinones in the respiratory chain. The immediate electron acceptor for the enzyme in this species is believed to be ubiquinone. Couples the redox reaction to proton translocation (for every two electrons transferred, four hydrogen ions are translocated across the cytoplasmic membrane), and thus conserves the redox energy in a proton gradient. This chain is NADH-quinone oxidoreductase subunit I, found in Azoarcus sp. (strain BH72).